The chain runs to 246 residues: tRNA pseudouridine synthase A (246 aa).

Catalysis depends on aspartate 52, which acts as the Nucleophile. Tyrosine 111 provides a ligand contact to substrate.

Belongs to the tRNA pseudouridine synthase TruA family. In terms of assembly, homodimer.

The catalysed reaction is uridine(38/39/40) in tRNA = pseudouridine(38/39/40) in tRNA. Its function is as follows. Formation of pseudouridine at positions 38, 39 and 40 in the anticodon stem and loop of transfer RNAs. This is tRNA pseudouridine synthase A from Borreliella afzelii (strain PKo) (Borrelia afzelii).